A 506-amino-acid polypeptide reads, in one-letter code: Radiation-sensitive protein 28 (506 aa).

5 WD repeats span residues 55–94 (PLSI…HRND), 193–233 (HHKY…AVQD), 285–325 (RMQS…RLYS), 357–396 (AHLR…LQPE), and 404–451 (LGTQ…LWNK).

The protein localises to the nucleus. Functionally, involved in transcription-coupled repair nucleotide excision repair (NER) of UV-induced DNA lesions. This Saccharomyces cerevisiae (strain ATCC 204508 / S288c) (Baker's yeast) protein is Radiation-sensitive protein 28 (RAD28).